A 356-amino-acid chain; its full sequence is Sensor protein BasS (356 aa).

The Cytoplasmic portion of the chain corresponds to 1 to 13; the sequence is MRFQRRAMTLRQR. The chain crosses the membrane as a helical span at residues 14–34; it reads LMLTIGLILLVFQLISTFWLW. Topologically, residues 35 to 64 are periplasmic; the sequence is HESTEQIQLFEQALRDNRNNDRHIMHEIRE. A helical transmembrane segment spans residues 65-88; it reads AVASLIVPGVFMVSLTLLICYQAV. The HAMP domain occupies 89–141; the sequence is RRITRPLAELQKELEARTADNLAPIAIHSSTLEIESVVSAINQLVTRLTTTLD. Residues 89-356 lie on the Cytoplasmic side of the membrane; it reads RRITRPLAEL…TRAWVLLKKA (268 aa). Positions 149–356 constitute a Histidine kinase domain; that stretch reads DVAHELRTPL…TRAWVLLKKA (208 aa). Histidine 152 is modified (phosphohistidine; by autocatalysis).

Post-translationally, autophosphorylated.

The protein localises to the cell inner membrane. The enzyme catalyses ATP + protein L-histidine = ADP + protein N-phospho-L-histidine.. In terms of biological role, member of the two-component regulatory system BasS/BasR. Autophosphorylates and activates BasR by phosphorylation. Plays a role in the adaptation of the organism to the host environment, in particular to neutrophils, and therefore it plays a role in virulence as well. The polypeptide is Sensor protein BasS (basS) (Salmonella typhimurium (strain LT2 / SGSC1412 / ATCC 700720)).